The primary structure comprises 332 residues: Ribosomal RNA small subunit methyltransferase H (332 aa).

Residues 39-41 (GGY), aspartate 56, phenylalanine 83, aspartate 100, and glutamine 107 each bind S-adenosyl-L-methionine.

The protein belongs to the methyltransferase superfamily. RsmH family.

The protein resides in the cytoplasm. It carries out the reaction cytidine(1402) in 16S rRNA + S-adenosyl-L-methionine = N(4)-methylcytidine(1402) in 16S rRNA + S-adenosyl-L-homocysteine + H(+). Its function is as follows. Specifically methylates the N4 position of cytidine in position 1402 (C1402) of 16S rRNA. The protein is Ribosomal RNA small subunit methyltransferase H of Bartonella tribocorum (strain CIP 105476 / IBS 506).